The chain runs to 800 residues: Kolavenyl diphosphate synthase TPS5, chloroplastic (800 aa).

The transit peptide at 1-75 (MSLAYSQATS…VILTAEKSVD (75 aa)) directs the protein to the chloroplast. Substrate is bound at residue Lys-244. Mg(2+) is bound by residues Asp-375 and Asp-377. The DXDD motif motif lies at 375-378 (DVDD). Residue Lys-461 participates in substrate binding.

Belongs to the terpene synthase family. The cofactor is Mg(2+). Mostly expressed in trichomes of leaves and fruits.

Its subcellular location is the plastid. It is found in the chloroplast. The enzyme catalyses (2E,6E,10E)-geranylgeranyl diphosphate = (+)-kolavenyl diphosphate. It participates in secondary metabolite biosynthesis; terpenoid biosynthesis. Its function is as follows. Involved in the biosynthesis of labdane-type diterpenoid including cleroda-dienols, and peregrinol lactones and furan derivatives, dopaminergic diterpenoids that can bind to dopamine receptors in the human pituitary gland, have probably ability to lower prolactin levels, and are used to treat menstrual cycle disorders (e.g. premenstrual syndrome and mastodynia). Terpene synthase that produces kolavenyl diphosphate from geranylgeranyl diphosphate (GGPP). This is Kolavenyl diphosphate synthase TPS5, chloroplastic from Vitex agnus-castus (Chaste tree).